Consider the following 72-residue polypeptide: UPF0270 protein YheU (72 aa).

It belongs to the UPF0270 family.

This Escherichia coli (strain ATCC 8739 / DSM 1576 / NBRC 3972 / NCIMB 8545 / WDCM 00012 / Crooks) protein is UPF0270 protein YheU.